The following is an 807-amino-acid chain: AP-5 complex subunit zeta-1 (807 aa).

In terms of assembly, probably part of the adaptor protein complex 5 (AP-5) a tetramer composed of AP5B1, AP5M1, AP5S1 and AP5Z1. Interacts with ZFYVE26 and SPG11.

It localises to the cytoplasm. The protein localises to the nucleus. Its function is as follows. As part of AP-5, a probable fifth adaptor protein complex it may be involved in endosomal transport. According to PubMed:20613862 it is a putative helicase required for efficient homologous recombination DNA double-strand break repair. The chain is AP-5 complex subunit zeta-1 (AP5Z1) from Homo sapiens (Human).